A 352-amino-acid polypeptide reads, in one-letter code: Desmethylxanthohumol 6'-O-methyltransferase (352 aa).

D219 contacts S-adenosyl-L-methionine. The Proton acceptor role is filled by H257.

This sequence belongs to the class I-like SAM-binding methyltransferase superfamily. Cation-independent O-methyltransferase family. As to quaternary structure, homodimer. As to expression, highly expressed in lupulin glands. Detected in early-, mid- and late-stage cones.

The protein resides in the cytoplasm. The enzyme catalyses desmethylxanthohumol + S-adenosyl-L-methionine = xanthohumol + S-adenosyl-L-homocysteine + H(+). It catalyses the reaction xanthogalenol + S-adenosyl-L-methionine = 4'-O-methylxanthohumol + S-adenosyl-L-homocysteine + H(+). It participates in secondary metabolite biosynthesis. Its activity is regulated as follows. Inhibited by S-adenosyl homocysteine. In terms of biological role, involved in the biosynthesis of prenylated phenolics natural products which contribute to the bitter taste of beer and display broad biological activities. Catalyzes the biosynthesis of xanthohumol. Methylates desmethylxanthohumol and xanthogalenol, but not caffeic acid, prenylflavanones, simple phenols or phenylpropanoids. The sequence is that of Desmethylxanthohumol 6'-O-methyltransferase from Humulus lupulus (European hop).